A 244-amino-acid polypeptide reads, in one-letter code: MDFSVIIPARYASSRLPAKLLKDVHGKPLIQLTYENAINSGANRVIIATDDKRIETVANDFGALTCMTDEHHTSGTSRIAQVLEVLDIDNDEIIVNVQGDEPMLNPSVIDQVANNLATSSMQIATLCEQITNKEQYLDPNCVKVVFNKAGKALYFSRAAIPFFREAKDFDLKLCFKHVGIYAYRAWFIKQYLTMSKSSYEQVEKLEQLTVLNEGFDIHVAPACDGIGHGVDIQCDLDKVRKELN.

The protein belongs to the KdsB family.

The protein localises to the cytoplasm. The enzyme catalyses 3-deoxy-alpha-D-manno-oct-2-ulosonate + CTP = CMP-3-deoxy-beta-D-manno-octulosonate + diphosphate. It participates in nucleotide-sugar biosynthesis; CMP-3-deoxy-D-manno-octulosonate biosynthesis; CMP-3-deoxy-D-manno-octulosonate from 3-deoxy-D-manno-octulosonate and CTP: step 1/1. Its pathway is bacterial outer membrane biogenesis; lipopolysaccharide biosynthesis. Its function is as follows. Activates KDO (a required 8-carbon sugar) for incorporation into bacterial lipopolysaccharide in Gram-negative bacteria. This Ruthia magnifica subsp. Calyptogena magnifica protein is 3-deoxy-manno-octulosonate cytidylyltransferase.